Reading from the N-terminus, the 172-residue chain is Adenine phosphoribosyltransferase (172 aa).

Belongs to the purine/pyrimidine phosphoribosyltransferase family. Homodimer.

The protein localises to the cytoplasm. It carries out the reaction AMP + diphosphate = 5-phospho-alpha-D-ribose 1-diphosphate + adenine. The protein operates within purine metabolism; AMP biosynthesis via salvage pathway; AMP from adenine: step 1/1. Functionally, catalyzes a salvage reaction resulting in the formation of AMP, that is energically less costly than de novo synthesis. The sequence is that of Adenine phosphoribosyltransferase from Streptococcus agalactiae serotype III (strain NEM316).